A 539-amino-acid chain; its full sequence is Chaperonin GroEL (539 aa).

Residues 29–32 (TLGP), 86–90 (DGTTT), G413, 477–479 (DAL), and D493 each bind ATP.

The protein belongs to the chaperonin (HSP60) family. In terms of assembly, forms a cylinder of 14 subunits composed of two heptameric rings stacked back-to-back. Interacts with the co-chaperonin GroES.

It is found in the cytoplasm. The catalysed reaction is ATP + H2O + a folded polypeptide = ADP + phosphate + an unfolded polypeptide.. Its function is as follows. Together with its co-chaperonin GroES, plays an essential role in assisting protein folding. The GroEL-GroES system forms a nano-cage that allows encapsulation of the non-native substrate proteins and provides a physical environment optimized to promote and accelerate protein folding. The sequence is that of Chaperonin GroEL from Clostridium perfringens (strain ATCC 13124 / DSM 756 / JCM 1290 / NCIMB 6125 / NCTC 8237 / Type A).